Reading from the N-terminus, the 504-residue chain is Anaerobic nitric oxide reductase transcription regulator NorR (504 aa).

Aspartate 57 is modified (4-aspartylphosphate). Positions 187–416 constitute a Sigma-54 factor interaction domain; that stretch reads MIGLSPGMTQ…LEHAIHRAVV (230 aa). Residues 215–222 and 278–287 contribute to the ATP site; these read GETGTGKE and ADNGTLFLDE. Residues 479-498 constitute a DNA-binding region (H-T-H motif); sequence WAACARMLETDVANLHRLAK.

Its pathway is nitrogen metabolism; nitric oxide reduction. Functionally, required for the expression of anaerobic nitric oxide (NO) reductase, acts as a transcriptional activator for at least the norVW operon. Activation also requires sigma-54. This chain is Anaerobic nitric oxide reductase transcription regulator NorR, found in Escherichia coli (strain SE11).